The following is a 209-amino-acid chain: NADH-quinone oxidoreductase subunit C (209 aa).

This sequence belongs to the complex I 30 kDa subunit family. In terms of assembly, NDH-1 is composed of 14 different subunits. Subunits NuoB, C, D, E, F, and G constitute the peripheral sector of the complex.

It localises to the cell inner membrane. The catalysed reaction is a quinone + NADH + 5 H(+)(in) = a quinol + NAD(+) + 4 H(+)(out). NDH-1 shuttles electrons from NADH, via FMN and iron-sulfur (Fe-S) centers, to quinones in the respiratory chain. The immediate electron acceptor for the enzyme in this species is believed to be ubiquinone. Couples the redox reaction to proton translocation (for every two electrons transferred, four hydrogen ions are translocated across the cytoplasmic membrane), and thus conserves the redox energy in a proton gradient. In Bordetella petrii (strain ATCC BAA-461 / DSM 12804 / CCUG 43448), this protein is NADH-quinone oxidoreductase subunit C.